A 222-amino-acid chain; its full sequence is GTP cyclohydrolase 1 (222 aa).

Residues Cys111, His114, and Cys182 each coordinate Zn(2+).

It belongs to the GTP cyclohydrolase I family. Toroid-shaped homodecamer, composed of two pentamers of five dimers.

The enzyme catalyses GTP + H2O = 7,8-dihydroneopterin 3'-triphosphate + formate + H(+). The protein operates within cofactor biosynthesis; 7,8-dihydroneopterin triphosphate biosynthesis; 7,8-dihydroneopterin triphosphate from GTP: step 1/1. Its activity is regulated as follows. Allosteric enzyme. Activity is modulated by K(+), divalent cations, UTP, and tetrahydrobiopterin. Tetrahydrobiopterin is an inhibitor of this enzyme. This chain is GTP cyclohydrolase 1, found in Salmonella typhi.